The primary structure comprises 666 residues: Probable potassium transport system protein Kup (666 aa).

12 helical membrane-spanning segments follow: residues 16-36 (GFIIALGIVYGDIGTSPLYTM), 58-78 (ISLIIWTLTLITTIKYVLVAL), 99-119 (TPWLIVPAVIGGATLLSDGAL), 141-161 (IFQNQSNVIFATLFILLLLFA), 167-187 (TGVIGKLFGPIMFIWFAFLGI), 221-241 (IFILGSIFLATTGAEALYSDL), 253-273 (WPFVKVAIILSYCGQGAWILA), 292-312 (FTMHVVILATLAAIIASQALI), 343-363 (TYIPVINWFLFAITTSIVLLF), 373-393 (YGLAITITMLMTTILLSFFLI), 402-422 (VLLMMIFFGILEGIFFLASAV), and 424-444 (FMHGGYVVVIIAVAIIFIMTI).

This sequence belongs to the HAK/KUP transporter (TC 2.A.72) family.

The protein resides in the cell membrane. It catalyses the reaction K(+)(in) + H(+)(in) = K(+)(out) + H(+)(out). In terms of biological role, transport of potassium into the cell. Likely operates as a K(+):H(+) symporter. This is Probable potassium transport system protein Kup from Streptococcus agalactiae serotype V (strain ATCC BAA-611 / 2603 V/R).